The sequence spans 429 residues: Tryptophan synthase beta chain 2 (429 aa).

The residue at position 111 (Lys111) is an N6-(pyridoxal phosphate)lysine.

Belongs to the TrpB family. As to quaternary structure, tetramer of two alpha and two beta chains. Pyridoxal 5'-phosphate serves as cofactor.

The catalysed reaction is (1S,2R)-1-C-(indol-3-yl)glycerol 3-phosphate + L-serine = D-glyceraldehyde 3-phosphate + L-tryptophan + H2O. Its pathway is amino-acid biosynthesis; L-tryptophan biosynthesis; L-tryptophan from chorismate: step 5/5. The beta subunit is responsible for the synthesis of L-tryptophan from indole and L-serine. This chain is Tryptophan synthase beta chain 2 (trpB2), found in Saccharolobus solfataricus (strain ATCC 35092 / DSM 1617 / JCM 11322 / P2) (Sulfolobus solfataricus).